A 427-amino-acid polypeptide reads, in one-letter code: Beta-porphyranase D (427 aa).

A signal peptide spans 1–19 (MILKQAILTLVLVNANLFA). Positions 23–45 (PKTYSSTDKETRQGPPKPPMGKR) are disordered. One can recognise a GH16 domain in the interval 32–308 (ETRQGPPKPP…WVRAYRLVDV (277 aa)). Substrate-binding residues include W73, R76, E168, E173, and E272. The active-site Nucleophile is the E168. E173 serves as the catalytic Proton donor.

Belongs to the glycosyl hydrolase 16 family.

It is found in the periplasm. It catalyses the reaction Hydrolysis of beta-D-galactopyranose-(1-&gt;4)-alpha-L-galactopyranose-6-sulfate linkages in porphyran.. Its function is as follows. Cleaves the sulfated polysaccharide porphyran at the (1-&gt;4) linkages between beta-D-galactopyranose and alpha-L-galactopyranose-6-sulfate, forming mostly the disaccharide alpha-L-galactopyranose-6-sulfate-(1-&gt;3)-beta-D-galactose. The chain is Beta-porphyranase D (porD) from Zobellia galactanivorans (strain DSM 12802 / CCUG 47099 / CIP 106680 / NCIMB 13871 / Dsij).